Here is a 453-residue protein sequence, read N- to C-terminus: Putative ABC transporter ATP-binding protein MM_0462 (453 aa).

The 236-residue stretch at 4-239 (LETRSLKYSY…QELLKKVGLR (236 aa)) folds into the ABC transporter domain. 37-44 (GQNGSGKS) contributes to the ATP binding site.

It belongs to the ABC transporter superfamily.

It localises to the cell membrane. In terms of biological role, probably part of an ABC transporter complex. Responsible for energy coupling to the transport system. This is Putative ABC transporter ATP-binding protein MM_0462 from Methanosarcina mazei (strain ATCC BAA-159 / DSM 3647 / Goe1 / Go1 / JCM 11833 / OCM 88) (Methanosarcina frisia).